We begin with the raw amino-acid sequence, 174 residues long: 2-hydroxy-palmitic acid dioxygenase MPO1 (174 aa).

Over 1-23 the chain is Cytoplasmic; sequence MGEGLLDLRSQLGFYKFYHHNPK. Residues 24-44 traverse the membrane as a helical segment; that stretch reads NVLIHSIFVPTILFSGSCMLH. Residues 45–63 lie on the Lumenal side of the membrane; the sequence is RVKIYQSISLTAVLSVLFS. Residues 64 to 84 traverse the membrane as a helical segment; the sequence is IFYCLLYLPTGLLAGVLLLLL. At 85–98 the chain is on the cytoplasmic side; it reads NLALIDHRVDLTFK. A helical transmembrane segment spans residues 99–119; sequence QELGLFTIGWIFQFVGHGVFE. Residues 120–131 lie on the Lumenal side of the membrane; sequence KRRPALIDNLVQ. A helical membrane pass occupies residues 132-152; sequence SLVLAPYFIMFEFLFKLGFMP. The Cytoplasmic portion of the chain corresponds to 153 to 174; that stretch reads RLKATLEHDLEIKQRNLRMQRQ.

It belongs to the MPO1 family. Fe(2+) is required as a cofactor.

It is found in the endoplasmic reticulum membrane. It carries out the reaction (R)-2-hydroxyhexadecanoate + O2 = pentadecanoate + CO2 + H2O. In terms of biological role, dioxygenase that catalyzes the alpha-oxidation of 2-hydroxy fatty acids in an iron-dependent manner. Involved in metabolism of phytosphingosine and is required for proper endoplasmic reticulum stress response. This Saccharomyces cerevisiae (strain ATCC 204508 / S288c) (Baker's yeast) protein is 2-hydroxy-palmitic acid dioxygenase MPO1.